A 56-amino-acid polypeptide reads, in one-letter code: Secreted virulence factor CLU5a (56 aa).

A signal peptide spans 1-18; the sequence is MKVSLTLLATLCASLASA.

The protein belongs to the MC69 virulence factor family. In terms of assembly, homodimer; disulfide-linked. Dimerization can possibly extend to multimerisation.

Its subcellular location is the secreted. Secreted protein required for appressorial penetration of intact host epidermal cells and for pathogenicit, but not for subsequent biotrophic and necrotrophic colonization of leaves. The polypeptide is Secreted virulence factor CLU5a (Colletotrichum graminicola (strain M1.001 / M2 / FGSC 10212) (Maize anthracnose fungus)).